Reading from the N-terminus, the 481-residue chain is Ribosomal protein uS12 methylthiotransferase RimO (481 aa).

The MTTase N-terminal domain maps to 8 to 124; that stretch reads MTVHLVSMGC…IAGRLRTILD (117 aa). [4Fe-4S] cluster is bound by residues Cys17, Cys53, and Cys87. Positions 148–188 are disordered; that stretch reads PTARAEVSVPGHGTAPDLSASVTPDSGPRATRRRLGTGPSA. The 232-residue stretch at 182–413 folds into the Radical SAM core domain; sequence LGTGPSAPLK…DLTDELVSQR (232 aa). Residues Cys196, Cys200, and Cys203 each contribute to the [4Fe-4S] cluster site. The TRAM domain maps to 415–480; the sequence is EDRIGTRGRV…GVDLVARPAN (66 aa).

The protein belongs to the methylthiotransferase family. RimO subfamily. [4Fe-4S] cluster is required as a cofactor.

It is found in the cytoplasm. It carries out the reaction L-aspartate(89)-[ribosomal protein uS12]-hydrogen + (sulfur carrier)-SH + AH2 + 2 S-adenosyl-L-methionine = 3-methylsulfanyl-L-aspartate(89)-[ribosomal protein uS12]-hydrogen + (sulfur carrier)-H + 5'-deoxyadenosine + L-methionine + A + S-adenosyl-L-homocysteine + 2 H(+). In terms of biological role, catalyzes the methylthiolation of an aspartic acid residue of ribosomal protein uS12. The protein is Ribosomal protein uS12 methylthiotransferase RimO of Cutibacterium acnes (strain DSM 16379 / KPA171202) (Propionibacterium acnes).